A 39-amino-acid chain; its full sequence is Photosystem II reaction center protein L (39 aa).

A helical transmembrane segment spans residues 18–38; the sequence is SLYLGLLLVFVLGILFSSYFF.

This sequence belongs to the PsbL family. As to quaternary structure, PSII is composed of 1 copy each of membrane proteins PsbA, PsbB, PsbC, PsbD, PsbE, PsbF, PsbH, PsbI, PsbJ, PsbK, PsbL, PsbM, PsbT, PsbX, PsbY, PsbZ, Psb30/Ycf12, peripheral proteins PsbO, CyanoQ (PsbQ), PsbU, PsbV and a large number of cofactors. It forms dimeric complexes.

Its subcellular location is the cellular thylakoid membrane. One of the components of the core complex of photosystem II (PSII). PSII is a light-driven water:plastoquinone oxidoreductase that uses light energy to abstract electrons from H(2)O, generating O(2) and a proton gradient subsequently used for ATP formation. It consists of a core antenna complex that captures photons, and an electron transfer chain that converts photonic excitation into a charge separation. This subunit is found at the monomer-monomer interface and is required for correct PSII assembly and/or dimerization. The protein is Photosystem II reaction center protein L of Trichormus variabilis (strain ATCC 29413 / PCC 7937) (Anabaena variabilis).